Reading from the N-terminus, the 378-residue chain is Deoxyguanosinetriphosphate triphosphohydrolase-like protein (378 aa).

Residues 62–198 (RLTHTIEVAQ…AAVADDVAYN (137 aa)) form the HD domain.

It belongs to the dGTPase family. Type 2 subfamily.

The chain is Deoxyguanosinetriphosphate triphosphohydrolase-like protein from Paracoccus denitrificans (strain Pd 1222).